Reading from the N-terminus, the 29-residue chain is Brevinin-2Rc (29 aa).

Residues Cys-23 and Cys-29 are joined by a disulfide bond.

Expressed by the skin glands.

Its subcellular location is the secreted. Its function is as follows. Antimicrobial peptide. This is Brevinin-2Rc from Pelophylax ridibundus (Marsh frog).